The primary structure comprises 359 residues: Phospho-N-acetylmuramoyl-pentapeptide-transferase (359 aa).

The next 10 membrane-spanning stretches (helical) occupy residues 3-23 (QILI…PALI), 55-75 (VAII…GLAF), 80-100 (ISAS…VGFL), 117-137 (TAKT…ALGF), 156-176 (IATV…VVSA), 187-207 (LDGL…LITF), 231-251 (LAIV…WNAA), 255-275 (IFMG…ISVT), 280-300 (ILAV…VLQI), and 334-354 (FWLL…GEWL).

This sequence belongs to the glycosyltransferase 4 family. MraY subfamily. It depends on Mg(2+) as a cofactor.

The protein resides in the cell membrane. The enzyme catalyses UDP-N-acetyl-alpha-D-muramoyl-L-alanyl-gamma-D-glutamyl-meso-2,6-diaminopimeloyl-D-alanyl-D-alanine + di-trans,octa-cis-undecaprenyl phosphate = di-trans,octa-cis-undecaprenyl diphospho-N-acetyl-alpha-D-muramoyl-L-alanyl-D-glutamyl-meso-2,6-diaminopimeloyl-D-alanyl-D-alanine + UMP. The protein operates within cell wall biogenesis; peptidoglycan biosynthesis. Its function is as follows. Catalyzes the initial step of the lipid cycle reactions in the biosynthesis of the cell wall peptidoglycan: transfers peptidoglycan precursor phospho-MurNAc-pentapeptide from UDP-MurNAc-pentapeptide onto the lipid carrier undecaprenyl phosphate, yielding undecaprenyl-pyrophosphoryl-MurNAc-pentapeptide, known as lipid I. The sequence is that of Phospho-N-acetylmuramoyl-pentapeptide-transferase from Mycobacterium avium (strain 104).